Reading from the N-terminus, the 181-residue chain is Regulator of G-protein signaling 10 (181 aa).

The tract at residues 1-35 is disordered; it reads MFTRAVSRLSRKRPPSDIHDGDGSSSSGHQSLKST. A phosphoserine mark is found at S24 and S41. The region spanning 41-156 is the RGS domain; it reads SLENLLEDPE…LKSDLFLKPK (116 aa). A lipid anchor (S-palmitoyl cysteine) is attached at C74. The interval 155–181 is disordered; it reads PKRTEEEEEEPPDAQTAAKRASRIYNT. A Phosphoserine modification is found at S176.

As to quaternary structure, interacts with GNAZ, GNAI1 and GNAI3. Associates specifically with the activated, GTP-bound forms of GNAZ and GNAI3.

Its subcellular location is the cytoplasm. The protein resides in the cytosol. The protein localises to the nucleus. Its function is as follows. Regulates G protein-coupled receptor signaling cascades, including signaling downstream of the muscarinic acetylcholine receptor CHRM2. Inhibits signal transduction by increasing the GTPase activity of G protein alpha subunits, thereby driving them into their inactive GDP-bound form. Modulates the activity of potassium channels that are activated in response to CHRM2 signaling. Activity on GNAZ is inhibited by palmitoylation of the G-protein. The protein is Regulator of G-protein signaling 10 (Rgs10) of Mus musculus (Mouse).